Here is a 145-residue protein sequence, read N- to C-terminus: uncharacterized protein (145 aa).

This is an uncharacterized protein from Homo sapiens (Human).